We begin with the raw amino-acid sequence, 316 residues long: Nucleotide-binding protein Sala_2050 (316 aa).

ATP is bound at residue 18-25 (GLSGAGKS). 69–72 (DSRS) serves as a coordination point for GTP. Positions 283-316 (GYEPTLTHRNLDSAPQDGLEGKPPSAARASGGAR) are disordered.

It belongs to the RapZ-like family.

Functionally, displays ATPase and GTPase activities. This is Nucleotide-binding protein Sala_2050 from Sphingopyxis alaskensis (strain DSM 13593 / LMG 18877 / RB2256) (Sphingomonas alaskensis).